The sequence spans 1165 residues: DNA-directed RNA polymerase subunit beta (1165 aa).

The protein belongs to the RNA polymerase beta chain family. The RNAP catalytic core consists of 2 alpha, 1 beta, 1 beta' and 1 omega subunit. When a sigma factor is associated with the core the holoenzyme is formed, which can initiate transcription.

It catalyses the reaction RNA(n) + a ribonucleoside 5'-triphosphate = RNA(n+1) + diphosphate. DNA-dependent RNA polymerase catalyzes the transcription of DNA into RNA using the four ribonucleoside triphosphates as substrates. This is DNA-directed RNA polymerase subunit beta from Corynebacterium glutamicum (strain ATCC 13032 / DSM 20300 / JCM 1318 / BCRC 11384 / CCUG 27702 / LMG 3730 / NBRC 12168 / NCIMB 10025 / NRRL B-2784 / 534).